The following is a 125-amino-acid chain: Large ribosomal subunit protein uL30 (125 aa).

Residues methionine 1–aspartate 61 are large ribosomal subunit protein uL30. The segment at phenylalanine 62 to leucine 125 is unknown.

It belongs to the universal ribosomal protein uL30 family. Part of the 50S ribosomal subunit.

In Aquifex aeolicus (strain VF5), this protein is Large ribosomal subunit protein uL30.